We begin with the raw amino-acid sequence, 255 residues long: 3-deoxy-manno-octulosonate cytidylyltransferase (255 aa).

It belongs to the KdsB family.

The protein resides in the cytoplasm. It carries out the reaction 3-deoxy-alpha-D-manno-oct-2-ulosonate + CTP = CMP-3-deoxy-beta-D-manno-octulosonate + diphosphate. It participates in nucleotide-sugar biosynthesis; CMP-3-deoxy-D-manno-octulosonate biosynthesis; CMP-3-deoxy-D-manno-octulosonate from 3-deoxy-D-manno-octulosonate and CTP: step 1/1. Its pathway is bacterial outer membrane biogenesis; lipopolysaccharide biosynthesis. Its function is as follows. Activates KDO (a required 8-carbon sugar) for incorporation into bacterial lipopolysaccharide in Gram-negative bacteria. In Hahella chejuensis (strain KCTC 2396), this protein is 3-deoxy-manno-octulosonate cytidylyltransferase.